The following is a 275-amino-acid chain: Elongation factor Ts (275 aa).

Positions T76–V79 are involved in Mg(2+) ion dislocation from EF-Tu.

The protein belongs to the EF-Ts family.

The protein localises to the cytoplasm. Its function is as follows. Associates with the EF-Tu.GDP complex and induces the exchange of GDP to GTP. It remains bound to the aminoacyl-tRNA.EF-Tu.GTP complex up to the GTP hydrolysis stage on the ribosome. The polypeptide is Elongation factor Ts (Corynebacterium glutamicum (strain R)).